The primary structure comprises 132 residues: Large ribosomal subunit protein uL14 (132 aa).

Belongs to the universal ribosomal protein uL14 family. As to quaternary structure, part of the 50S ribosomal subunit. Forms a cluster with proteins L3 and L24e, part of which may contact the 16S rRNA in 2 intersubunit bridges.

In terms of biological role, binds to 23S rRNA. Forms part of two intersubunit bridges in the 70S ribosome. This Methanosarcina barkeri (strain Fusaro / DSM 804) protein is Large ribosomal subunit protein uL14.